A 77-amino-acid chain; its full sequence is UPF0349 protein lin2491 (77 aa).

This sequence belongs to the UPF0349 family.

This is UPF0349 protein lin2491 from Listeria innocua serovar 6a (strain ATCC BAA-680 / CLIP 11262).